The following is a 256-amino-acid chain: Small ribosomal subunit protein eS1 (256 aa).

Alanine 2 carries the post-translational modification N-acetylalanine; partial.

This sequence belongs to the eukaryotic ribosomal protein eS1 family. Component of the small ribosomal subunit. Mature ribosomes consist of a small (40S) and a large (60S) subunit. The 40S subunit contains about 33 different proteins and 1 molecule of RNA (18S). The 60S subunit contains about 49 different proteins and 3 molecules of RNA (25S, 5.8S and 5S).

Its subcellular location is the cytoplasm. The chain is Small ribosomal subunit protein eS1 from Postia placenta (strain ATCC 44394 / Madison 698-R) (Brown rot fungus).